We begin with the raw amino-acid sequence, 138 residues long: Cysteine desulfuration protein SufE (138 aa).

Cysteine 51 serves as the catalytic Cysteine persulfide intermediate.

This sequence belongs to the SufE family. In terms of assembly, homodimer. Interacts with SufS.

The protein localises to the cytoplasm. It functions in the pathway cofactor biosynthesis; iron-sulfur cluster biosynthesis. Participates in cysteine desulfuration mediated by SufS. Cysteine desulfuration mobilizes sulfur from L-cysteine to yield L-alanine and constitutes an essential step in sulfur metabolism for biosynthesis of a variety of sulfur-containing biomolecules. Functions as a sulfur acceptor for SufS, by mediating the direct transfer of the sulfur atom from the S-sulfanylcysteine of SufS, an intermediate product of cysteine desulfuration process. This Escherichia fergusonii (strain ATCC 35469 / DSM 13698 / CCUG 18766 / IAM 14443 / JCM 21226 / LMG 7866 / NBRC 102419 / NCTC 12128 / CDC 0568-73) protein is Cysteine desulfuration protein SufE.